Consider the following 210-residue polypeptide: Amelogenin, X isoform (210 aa).

The first 16 residues, 1–16 (MGTWILFACLLGAAFA), serve as a signal peptide directing secretion. The residue at position 32 (S32) is a Phosphoserine. Composition is skewed to low complexity over residues 109–119 (VAPQQPMMPVP) and 136–169 (PSAQ…HPMQ). Residues 109–187 (VAPQQPMMPV…PPLFSMQPLS (79 aa)) are disordered. Positions 170–179 (PLAPQPPLPP) are enriched in pro residues.

This sequence belongs to the amelogenin family. Interacts with KRT5. Several forms are produced by C-terminal processing. In terms of processing, phosphorylated by FAM20C in vitro.

It localises to the secreted. It is found in the extracellular space. Its subcellular location is the extracellular matrix. Plays a role in the biomineralization of teeth. Seems to regulate the formation of crystallites during the secretory stage of tooth enamel development. Thought to play a major role in the structural organization and mineralization of developing enamel. This chain is Amelogenin, X isoform (Amelx), found in Mus musculus (Mouse).